We begin with the raw amino-acid sequence, 315 residues long: DNA-directed RNA polymerase subunit alpha (315 aa).

An alpha N-terminal domain (alpha-NTD) region spans residues 1–228 (MLEIEKPKIE…EHFKLFMTLT (228 aa)). The alpha C-terminal domain (alpha-CTD) stretch occupies residues 245-315 (KEKVLEMAIE…LGLSLKQNED (71 aa)).

This sequence belongs to the RNA polymerase alpha chain family. Homodimer. The RNAP catalytic core consists of 2 alpha, 1 beta, 1 beta' and 1 omega subunit. When a sigma factor is associated with the core the holoenzyme is formed, which can initiate transcription.

It carries out the reaction RNA(n) + a ribonucleoside 5'-triphosphate = RNA(n+1) + diphosphate. Its function is as follows. DNA-dependent RNA polymerase catalyzes the transcription of DNA into RNA using the four ribonucleoside triphosphates as substrates. The chain is DNA-directed RNA polymerase subunit alpha from Clostridium kluyveri (strain NBRC 12016).